We begin with the raw amino-acid sequence, 412 residues long: Class E basic helix-loop-helix protein 40 (412 aa).

Residues M1–E21 form a disordered region. The interval M1–Q139 is essential for interaction with BMAL1, E-box binding and repressor activity against the CLOCK-BMAL1 heterodimer. The bHLH domain occupies T52–L107. Residues L75–L79 form a necessary for interaction with RXRA and repressor activity against RXRA region. Residues F142–L175 form the Orange domain. K159 is covalently cross-linked (Glycyl lysine isopeptide (Lys-Gly) (interchain with G-Cter in SUMO1, SUMO2 and SUMO3)). A Glycyl lysine isopeptide (Lys-Gly) (interchain with G-Cter in SUMO2) cross-link involves residue K167. 2 disordered regions span residues L182–V256 and K279–E298. A Phosphoserine modification is found at S235. K279 is covalently cross-linked (Glycyl lysine isopeptide (Lys-Gly) (interchain with G-Cter in SUMO1); alternate). Residue K279 forms a Glycyl lysine isopeptide (Lys-Gly) (interchain with G-Cter in SUMO1, SUMO2 and SUMO3); alternate linkage. Residue K279 forms a Glycyl lysine isopeptide (Lys-Gly) (interchain with G-Cter in SUMO2); alternate linkage. K288 is covalently cross-linked (Glycyl lysine isopeptide (Lys-Gly) (interchain with G-Cter in SUMO2)). S383 is modified (phosphoserine).

Homodimer. Heterodimer with BHLHE41/DEC2. Interacts with TCF3/E47. Interacts with ubiquitin-conjugating enzyme UBE2I/UBC9. Interacts with HDAC1, SUMO1, RXRA and BMAL1. Ubiquitinated; which may lead to proteasomal degradation. Post-translationally, sumoylation inhibits its ubiquitination and promotes its negative regulation of the CLOCK-BMAL1 heterodimer transcriptional activator activity.

It localises to the cytoplasm. It is found in the nucleus. Transcriptional repressor involved in the regulation of the circadian rhythm by negatively regulating the activity of the clock genes and clock-controlled genes. Acts as the negative limb of a novel autoregulatory feedback loop (DEC loop) which differs from the one formed by the PER and CRY transcriptional repressors (PER/CRY loop). Both these loops are interlocked as it represses the expression of PER1/2 and in turn is repressed by PER1/2 and CRY1/2. Represses the activity of the circadian transcriptional activator: CLOCK-BMAL1|BMAL2 heterodimer by competing for the binding to E-box elements (5'-CACGTG-3') found within the promoters of its target genes. Negatively regulates its own expression and the expression of DBP and BHLHE41/DEC2. Acts as a corepressor of RXR and the RXR-LXR heterodimers and represses the ligand-induced RXRA and NR1H3/LXRA transactivation activity. May be involved in the regulation of chondrocyte differentiation via the cAMP pathway. Represses the transcription of NR0B2 and attentuates the transactivation of NR0B2 by the CLOCK-BMAL1 complex. Drives the circadian rhythm of blood pressure through transcriptional repression of ATP1B1 in the cardiovascular system. This is Class E basic helix-loop-helix protein 40 (BHLHE40) from Bos taurus (Bovine).